Here is a 748-residue protein sequence, read N- to C-terminus: Catalase-peroxidase (748 aa).

Residues M1 to R16 are compositionally biased toward polar residues. Residues M1 to D43 form a disordered region. A cross-link (tryptophyl-tyrosyl-methioninium (Trp-Tyr) (with M-264)) is located at residues W113 to Y238. H114 serves as the catalytic Proton acceptor. The segment at residues Y238–M264 is a cross-link (tryptophyl-tyrosyl-methioninium (Tyr-Met) (with W-113)). H279 serves as a coordination point for heme b.

This sequence belongs to the peroxidase family. Peroxidase/catalase subfamily. As to quaternary structure, homodimer or homotetramer. Heme b serves as cofactor. In terms of processing, formation of the three residue Trp-Tyr-Met cross-link is important for the catalase, but not the peroxidase activity of the enzyme.

It catalyses the reaction H2O2 + AH2 = A + 2 H2O. The enzyme catalyses 2 H2O2 = O2 + 2 H2O. Functionally, bifunctional enzyme with both catalase and broad-spectrum peroxidase activity. This chain is Catalase-peroxidase, found in Mycolicibacterium paratuberculosis (strain ATCC BAA-968 / K-10) (Mycobacterium paratuberculosis).